A 688-amino-acid polypeptide reads, in one-letter code: Complement C1s-1 subcomponent (688 aa).

Residues Met-1–Ala-15 form the signal peptide. Residues Glu-16–Ile-130 enclose the CUB 1 domain. Ca(2+) is bound by residues Glu-60, Asp-68, Asp-113, Asp-131, Ile-132, and Glu-134. Cysteines 65 and 83 form a disulfide. One can recognise an EGF-like; calcium-binding domain in the interval Asp-131–Gly-172. Cystine bridges form between Cys-135–Cys-147, Cys-143–Cys-156, and Cys-158–Cys-171. Residues Asn-149, Phe-150, and Gly-153 each coordinate Ca(2+). Asn-149 carries the (3R)-3-hydroxyasparagine modification. Asn-174 carries an N-linked (GlcNAc...) asparagine glycan. A disulfide bridge links Cys-175 with Cys-202. The CUB 2 domain maps to Cys-175–Asp-290. Ca(2+)-binding residues include Glu-226, Asp-236, Asp-275, Gly-278, and Gln-279. A disulfide bridge connects residues Cys-234 and Cys-251. Sushi domains follow at residues Ile-292–Pro-356 and Val-357–Pro-423. Disulfide bonds link Cys-294-Cys-341, Cys-321-Cys-354, Cys-359-Cys-403, Cys-386-Cys-421, Cys-425-Cys-549, Cys-595-Cys-618, and Cys-627-Cys-659. A Peptidase S1 domain is found at Ile-438–Gln-680. Catalysis depends on charge relay system residues His-475 and Asp-529. The Charge relay system role is filled by Ser-631. The N-linked (GlcNAc...) asparagine glycan is linked to Asn-641.

Belongs to the peptidase S1 family. Core component of the complement C1 complex, a calcium-dependent complex composed of 1 molecule of the C1Q subcomplex, 2 molecules of C1R and 2 molecules of C1S. The C1Q subcomplex is composed 18 subunits: 3 chains of C1QA, C1QB, and C1QC trimerize to form 6 collagen-like triple helices connected to six globular ligand-recognition modules. Post-translationally, cleaved and activated by C1R to generate Complement C1s subcomponent heavy and light chains. In terms of processing, the iron and 2-oxoglutarate dependent 3-hydroxylation of aspartate and asparagine is (R) stereospecific within EGF domains. Predominantly expressed in liver.

Its subcellular location is the secreted. It localises to the cell surface. It catalyses the reaction Cleavage of Arg-|-Ala bond in complement component C4 to form C4a and C4b, and Lys(or Arg)-|-Lys bond in complement component C2 to form C2a and C2b: the 'classical' pathway C3 convertase.. With respect to regulation, cleaved and activated by C1R. Immunoglobulin-binding promotes autoactivation of C1R, which results in the cleavage of the Arg-Ile bond in the catalytic domain. Inhibited by C1 inhibitor (SERPING1). Component of the complement C1 complex, a multiprotein complex that initiates the classical pathway of the complement system, a cascade of proteins that leads to phagocytosis and breakdown of pathogens and signaling that strengthens the adaptive immune system. C1S is activated following association of the C1 complex with immunoglobulins (IgG or IgM) complexed with antigens to form antigen-antibody complexes on the surface of pathogens. C1S is cleaved and activated by C1R to generate C1s subcomponent heavy and light chains. C1s subcomponent light chain then cleaves and activates C2 and C4, the next components of the classical complement pathway. Its function is as follows. Serine protease component of the complement C1 complex, which catalyzes cleavage and activation of C2 and C4, the next components of the classical complement pathway. Also cleaves IGFBP5 and thereby inhibits the trophic effects of IGF1. The polypeptide is Complement C1s-1 subcomponent (Mus musculus (Mouse)).